The sequence spans 170 residues: Calcineurin subunit B type 1 (170 aa).

4 EF-hand domains span residues 18 to 46 (DEIR…FMSL), 50 to 85 (QQNP…FSVR), 87 to 122 (DKLS…MVGN), and 128 to 163 (QLQQ…TDIH). Ca(2+)-binding residues include Asp-31, Asp-33, Ser-35, Glu-42, Asp-63, Asp-65, Asn-67, Glu-69, Glu-74, Asp-100, Asp-102, Asp-104, Tyr-106, Glu-111, Asp-141, Asp-143, Asp-145, Lys-147, and Glu-152.

This sequence belongs to the calcineurin regulatory subunit family. As to quaternary structure, composed of two components (A and B), the A component is the catalytic subunit and the B component confers calcium sensitivity.

In terms of biological role, calcineurin is a calcium-binding and calmodulin-binding protein found in all cells from yeast to mammals, and a calcium-dependent, calmodulin-stimulated protein phosphatase. The chain is Calcineurin subunit B type 1 (CanB) from Drosophila melanogaster (Fruit fly).